Consider the following 142-residue polypeptide: Baculoviral IAP repeat-containing protein 5 (142 aa).

The BIR repeat unit spans residues 18-88; sequence RIYTFKNWPF…KHSPGCAFLT (71 aa). Position 23 is an N6-acetyllysine (K23). Residue T34 is modified to Phosphothreonine; by CDK1 and CDK15. Residue T48 is modified to Phosphothreonine. The Zn(2+) site is built by C57, C60, H77, and C84. 4 positions are modified to N6-acetyllysine: K90, K110, K112, and K115. Position 117 is a phosphothreonine; by AURKB (T117).

This sequence belongs to the IAP family. In terms of assembly, monomer or homodimer. Exists as a homodimer in the apo state and as a monomer in the CPC-bound state. The monomer protects cells against apoptosis more efficiently than the dimer. Only the dimeric form is capable of enhancing tubulin stability in cells. When phosphorylated, interacts with LAMTOR5/HBXIP; the resulting complex binds pro-CASP9, as well as active CASP9, but much less efficiently. Component of the chromosomal passenger complex (CPC) composed of at least BIRC5/survivin, CDCA8/borealin, INCENP, AURKB or AURKC; in the complex forms a triple-helix bundle-based subcomplex with INCENP and CDCA8. Interacts with JTB. Interacts (via BIR domain) with histone H3 phosphorylated at 'Thr-3' (H3pT3). Interacts with EVI5. Interacts with GTP-bound RAN in both the S and M phases of the cell cycle. Interacts with USP9X. Interacts with tubulin. Interacts with BIRC2/c-IAP1. The monomeric form interacts with XIAP/BIRC4. Both the dimeric and monomeric form can interact with DIABLO/SMAC. Interacts with BIRC6/bruce. Interacts with FBXL7; this interaction facilitates the polyubiquitination and subsequent proteasomal degradation of BIRC5 by the SCF(FBXL7) E3 ubiquitin-protein ligase complex. Post-translationally, ubiquitinated by the Cul9-RING ubiquitin-protein ligase complex, leading to its degradation. Ubiquitination is required for centrosomal targeting. Deubiquitinated by USP35 or USP38; leading to stabilization. In terms of processing, in vitro phosphorylation at Thr-117 by AURKB prevents interaction with INCENP and localization to mitotic chromosomes. Phosphorylation at Thr-48 by CK2 is critical for its mitotic and anti-apoptotic activities. Phosphorylation at Thr-34 by CDK15 is critical for its anti-apoptotic activity.

The protein resides in the cytoplasm. The protein localises to the nucleus. Its subcellular location is the chromosome. It is found in the centromere. It localises to the cytoskeleton. The protein resides in the spindle. The protein localises to the kinetochore. Its subcellular location is the midbody. In terms of biological role, multitasking protein that has dual roles in promoting cell proliferation and preventing apoptosis. Component of a chromosome passage protein complex (CPC) which is essential for chromosome alignment and segregation during mitosis and cytokinesis. Acts as an important regulator of the localization of this complex; directs CPC movement to different locations from the inner centromere during prometaphase to midbody during cytokinesis and participates in the organization of the center spindle by associating with polymerized microtubules. Involved in the recruitment of CPC to centromeres during early mitosis via association with histone H3 phosphorylated at 'Thr-3' (H3pT3) during mitosis. The complex with RAN plays a role in mitotic spindle formation by serving as a physical scaffold to help deliver the RAN effector molecule TPX2 to microtubules. May counteract a default induction of apoptosis in G2/M phase. The acetylated form represses STAT3 transactivation of target gene promoters. May play a role in neoplasia. Inhibitor of CASP3 and CASP7. Essential for the maintenance of mitochondrial integrity and function. The sequence is that of Baculoviral IAP repeat-containing protein 5 (Birc5) from Rattus norvegicus (Rat).